The chain runs to 338 residues: Lipoate-protein ligase A (338 aa).

Positions 29-216 (PATQRVLFLW…AFFAHYGERV (188 aa)) constitute a BPL/LPL catalytic domain. ATP is bound by residues Arg71, 76-79 (GAVF), and Lys134. A (R)-lipoate-binding site is contributed by Lys134.

It belongs to the LplA family. As to quaternary structure, monomer.

The protein resides in the cytoplasm. The enzyme catalyses L-lysyl-[lipoyl-carrier protein] + (R)-lipoate + ATP = N(6)-[(R)-lipoyl]-L-lysyl-[lipoyl-carrier protein] + AMP + diphosphate + H(+). The protein operates within protein modification; protein lipoylation via exogenous pathway; protein N(6)-(lipoyl)lysine from lipoate: step 1/2. Its pathway is protein modification; protein lipoylation via exogenous pathway; protein N(6)-(lipoyl)lysine from lipoate: step 2/2. Its function is as follows. Catalyzes both the ATP-dependent activation of exogenously supplied lipoate to lipoyl-AMP and the transfer of the activated lipoyl onto the lipoyl domains of lipoate-dependent enzymes. The sequence is that of Lipoate-protein ligase A from Shigella sonnei (strain Ss046).